A 599-amino-acid polypeptide reads, in one-letter code: MTDLSHIRNFSIIAHIDHGKSTIADRFIQICGGLSDREMEAQVLDSMDLERERGITIKAHSVTLNYKARDGKTYQLNFIDTPGHVDFTYEVSRSLAACEGALLVVDAAQGVEAQSVANCYTAIEQGLEVIPVLNKMDLPQAEPDRVAQEIEDIIGLDATEAVRCSAKSGLGMEDVLEELVRLVPPPTGDVGAPLQALIIDSWFDNYLGVVSLVRVVQGTLRLKDKIIAKTIGKSQLVDGLGVFTPKPLQLKELKAGEVGFVVAGIKDIHGAPVGDTITHAQTPDVEALAGFQKIKPQVYAGMFPVSSDDFESFREALAKLTLNDASLFYEPESSDALGFGFRCGFLGMLHMEIIQERLEREYDLDLITTAPTVVYEIETAKGETIFVDNPSKLPDPGSINEMREPIVEANILVPQEHLGNVITLCVEKRGVQKDLQFTGSQVAVRYELPMNEVVTDFFDRLKSVSRGFASLDYNFLRFQPAKLVRLDVLINGDKVDALALIVHRDKSQHMGRQLVEKMKDLIPRQMFDVAIQAAIGGQVVARSTVKALRKDVLAKCYGGDATRKKKLLEKQKAGKKRMKQVGNVEIPQAAFFAVLKIDS.

Positions 5 to 187 (SHIRNFSIIA…ELVRLVPPPT (183 aa)) constitute a tr-type G domain. Residues 17–22 (DHGKST) and 134–137 (NKMD) each bind GTP.

Belongs to the TRAFAC class translation factor GTPase superfamily. Classic translation factor GTPase family. LepA subfamily.

Its subcellular location is the cell inner membrane. The catalysed reaction is GTP + H2O = GDP + phosphate + H(+). Required for accurate and efficient protein synthesis under certain stress conditions. May act as a fidelity factor of the translation reaction, by catalyzing a one-codon backward translocation of tRNAs on improperly translocated ribosomes. Back-translocation proceeds from a post-translocation (POST) complex to a pre-translocation (PRE) complex, thus giving elongation factor G a second chance to translocate the tRNAs correctly. Binds to ribosomes in a GTP-dependent manner. In Cellvibrio japonicus (strain Ueda107) (Pseudomonas fluorescens subsp. cellulosa), this protein is Elongation factor 4.